A 739-amino-acid chain; its full sequence is Nuclear pore complex protein NUP62 (739 aa).

19 consecutive repeat copies span residues 6–7 (FG), 17–18 (FG), 50–51 (FG), 52–53 (FG), 68–69 (FG), 70–71 (FG), 78–79 (FG), 80–81 (FG), 91–92 (FG), 93–94 (FG), 108–109 (FG), 110–111 (FG), 124–125 (FG), 141–142 (FG), 159–160 (FG), 174–175 (FG), 186–187 (FG), 207–208 (FG), and 221–222 (FG). Positions 6 to 450 (FGQSNSVGGF…AATFSTTGFG (445 aa)) are 26 X 2 AA repeats of F-G. The disordered stretch occupies residues 18 to 67 (GSSSATNSSSASSTTSPLSFSFNQSSNPSSTGFGFGSSVSSTPASSTTPS). The segment covering 79–218 (GFGSSASSST…ASSSAATSTS (140 aa)) has biased composition (low complexity). Positions 79–245 (GFGSSASSST…VASSAPGSSS (167 aa)) are disordered. Positions 232–245 (PSFSVASSAPGSSS) are enriched in low complexity. 5 consecutive repeat copies span residues 248–249 (FG), 271–272 (FG), 280–281 (FG), 308–309 (FG), and 366–367 (FG). 3 disordered regions span residues 281–329 (GSSS…ASPF), 341–366 (TASS…SFSF), and 399–418 (TTTS…SAPA). A run of 2 repeats spans residues 426 to 427 (FG) and 449 to 450 (FG). The segment at 471–533 (KTSTPASSSQ…AVAPVAGSPK (63 aa)) is disordered. Residues 472 to 519 (TSTPASSSQPQTTSPAFSFSLPSSTSTTAPATSSATTTQTTLVVPSSS) are compositionally biased toward low complexity. Residues 584–674 (RLEIEVAKVV…IRSIIQSVNA (91 aa)) are a coiled coil.

The protein belongs to the nucleoporin NSP1/NUP62 family. As to quaternary structure, part of the nuclear pore complex (NPC). The NPC has an eight-fold symmetrical structure comprising a central transport channel and two rings, the cytoplasmic and nuclear rings, to which eight filaments are attached. The cytoplasmic filaments have loose ends, while the nuclear filaments are joined in a distal ring, forming a nuclear basket. NPCs are highly dynamic in configuration and composition, and can be devided in 3 subcomplexes, the NUP62 subcomplex, the NUP107-160 subcomplex and the NUP93 subcomplex, containing approximately 30 different nucleoporin proteins. Interacts with NUP58 and the importin KPNB1.

Its subcellular location is the nucleus envelope. It localises to the nucleus. It is found in the nuclear pore complex. The polypeptide is Nuclear pore complex protein NUP62 (Arabidopsis thaliana (Mouse-ear cress)).